Reading from the N-terminus, the 434-residue chain is UDP-N-acetylmuramate--L-alanine ligase (434 aa).

108–114 (GSHGKTT) is an ATP binding site.

It belongs to the MurCDEF family.

It is found in the cytoplasm. It catalyses the reaction UDP-N-acetyl-alpha-D-muramate + L-alanine + ATP = UDP-N-acetyl-alpha-D-muramoyl-L-alanine + ADP + phosphate + H(+). Its pathway is cell wall biogenesis; peptidoglycan biosynthesis. Its function is as follows. Cell wall formation. This chain is UDP-N-acetylmuramate--L-alanine ligase, found in Geobacillus kaustophilus (strain HTA426).